A 125-amino-acid chain; its full sequence is Prefoldin subunit beta (125 aa).

Belongs to the prefoldin subunit beta family. As to quaternary structure, heterohexamer of two alpha and four beta subunits.

The protein localises to the cytoplasm. Molecular chaperone capable of stabilizing a range of proteins. Seems to fulfill an ATP-independent, HSP70-like function in archaeal de novo protein folding. In Pyrobaculum islandicum (strain DSM 4184 / JCM 9189 / GEO3), this protein is Prefoldin subunit beta.